The sequence spans 328 residues: Zinc transporter ZIP13 (328 aa).

The Lumenal segment spans residues M1–P7. Residues G8–G28 traverse the membrane as a helical segment. The Cytoplasmic segment spans residues R29–W68. The chain crosses the membrane as a helical span at residues I69–I89. At P90–Q108 the chain is on the lumenal side. A helical membrane pass occupies residues L109–A129. Topologically, residues W130–Q149 are cytoplasmic. The helical transmembrane segment at Q150–L170 threads the bilayer. The Lumenal portion of the chain corresponds to D171–A199. Residues V200–L220 traverse the membrane as a helical segment. Positions H221–E226 match the XEXPHE-motif motif. The Cytoplasmic segment spans residues H221–S242. The chain crosses the membrane as a helical span at residues A243–C263. At T264–T273 the chain is on the lumenal side. Residues A274 to L294 form a helical membrane-spanning segment. Topologically, residues P295 to S306 are cytoplasmic. The chain crosses the membrane as a helical span at residues L307–V327. A topological domain (lumenal) is located at residue D328.

It belongs to the ZIP transporter (TC 2.A.5) family. In terms of assembly, homodimer.

It is found in the golgi apparatus membrane. The protein resides in the cytoplasmic vesicle membrane. The protein localises to the endoplasmic reticulum membrane. The catalysed reaction is Zn(2+)(in) = Zn(2+)(out). Functions as a zinc transporter transporting Zn(2+) from the Golgi apparatus to the cytosol and thus influences the zinc level at least in areas of the cytosol. May regulate beige adipocyte differentiation. This chain is Zinc transporter ZIP13, found in Pongo abelii (Sumatran orangutan).